The primary structure comprises 140 residues: Thioredoxin M-type, chloroplastic (140 aa).

The transit peptide at 1 to 34 (MALVARRAAVPSARSSARPAFARAAPRRSVVVRA) directs the protein to the chloroplast. The 106-residue stretch at 35–140 (EAGAVNDDTF…IVQTVEKYLN (106 aa)) folds into the Thioredoxin domain. Active-site nucleophile residues include C64 and C67. C64 and C67 form a disulfide bridge.

Belongs to the thioredoxin family. Plant M-type subfamily. In terms of assembly, forms a complex with heterodimeric ferredoxin-thioredoxin reductase (FTR) and ferredoxin.

Its subcellular location is the plastid. It is found in the chloroplast. Functionally, participates in various redox reactions through the reversible oxidation of the active center dithiol to a disulfide. The M form is known to activate NADP-malate dehydrogenase. The sequence is that of Thioredoxin M-type, chloroplastic (TRXM) from Chlamydomonas reinhardtii (Chlamydomonas smithii).